Reading from the N-terminus, the 252-residue chain is Beta-crystallin B1 (252 aa).

Composition is skewed to low complexity over residues 1–15 (MSQAAKASASATVAV) and 24–37 (KGAPPAGTSPSPGT). The tract at residues 1 to 42 (MSQAAKASASATVAVNPGPDTKGKGAPPAGTSPSPGTTLAPT) is disordered. Ser-2 carries the post-translational modification N-acetylserine. The segment at 2–58 (SQAAKASASATVAVNPGPDTKGKGAPPAGTSPSPGTTLAPTTVPITSAKAAELPPGN) is N-terminal arm. Beta/gamma crystallin 'Greek key' domains are found at residues 59–98 (YRLVVFELENFQGRRAEFSGECSNLADRGFDRVRSIIVSA) and 99–143 (GPWV…RPIK). The tract at residues 144–148 (MDAQE) is connecting peptide. Beta/gamma crystallin 'Greek key' domains follow at residues 149 to 190 (HKIS…KVSS) and 191 to 233 (GTWV…RRLR). Residues 235–252 (KQWHLEGSFPVLATEPPK) form a C-terminal arm region.

Belongs to the beta/gamma-crystallin family. As to quaternary structure, homo/heterodimer, or complexes of higher-order. The structure of beta-crystallin oligomers seems to be stabilized through interactions between the N-terminal arms. In terms of processing, specific cleavages in the N-terminal arm occur during lens maturation and give rise to truncated forms, leading to impaired oligomerization and protein insolubilization.

Its function is as follows. Crystallins are the dominant structural components of the vertebrate eye lens. In Homo sapiens (Human), this protein is Beta-crystallin B1 (CRYBB1).